Consider the following 159-residue polypeptide: Large ribosomal subunit protein uL11 (159 aa).

It belongs to the universal ribosomal protein uL11 family. As to quaternary structure, part of the ribosomal stalk of the 50S ribosomal subunit. Interacts with L10 and the large rRNA to form the base of the stalk. L10 forms an elongated spine to which L12 dimers bind in a sequential fashion forming a multimeric L10(L12)X complex.

Forms part of the ribosomal stalk which helps the ribosome interact with GTP-bound translation factors. In Methanothrix thermoacetophila (strain DSM 6194 / JCM 14653 / NBRC 101360 / PT) (Methanosaeta thermophila), this protein is Large ribosomal subunit protein uL11.